Consider the following 560-residue polypeptide: 2-hydroxyacyl-CoA lyase (560 aa).

Position 49 (glutamate 49) interacts with thiamine diphosphate. Mg(2+) contacts are provided by aspartate 446 and asparagine 473. The short motif at proline 558–leucine 560 is the Peroxisomal target signal 1 (PTS1) element.

The protein belongs to the TPP enzyme family. Mg(2+) serves as cofactor. The cofactor is thiamine diphosphate.

Its subcellular location is the cytoplasm. The protein resides in the peroxisome matrix. It carries out the reaction an (R)-2-hydroxy-long-chain-fatty acyl-CoA = a long-chain fatty aldehyde + formyl-CoA. The enzyme catalyses a 2-hydroxy-3-methyl fatty acyl-CoA = a 2-methyl-branched fatty aldehyde + formyl-CoA. Functionally, catalyzes a carbon-carbon cleavage reaction; cleaves a 2-hydroxy-3-methylacyl-CoA into formyl-CoA and a 2-methyl-branched fatty aldehyde. In Saccharomyces cerevisiae (strain ATCC 204508 / S288c) (Baker's yeast), this protein is 2-hydroxyacyl-CoA lyase.